The chain runs to 173 residues: Nuclear transcription factor Y subunit B-8 (173 aa).

Positions 1–30 are disordered; sequence MAESQAKSPGGCGSHESGGDQSPRSLHVRE. Alanine 2 bears the N-acetylalanine mark. A DNA-binding region spans residues 35–41; sequence LPIANIS. A subunit association domain (SAD) region spans residues 62–73; sequence VQECVSEFISFV. The disordered stretch occupies residues 123-173; that stretch reads DTKGSAKGGDPNAKKDGQSSQNGQFSQLAHQGPYGNSQAQQHMMVPMPGTD. Positions 140 to 163 are enriched in polar residues; it reads QSSQNGQFSQLAHQGPYGNSQAQQ.

This sequence belongs to the NFYB/HAP3 subunit family. In terms of assembly, heterotrimeric transcription factor composed of three components, NF-YA, NF-YB and NF-YC. NF-YB and NF-YC must interact and dimerize for NF-YA association and DNA binding. In terms of tissue distribution, expressed in flowers and mature rosettes.

The protein resides in the nucleus. Component of the NF-Y/HAP transcription factor complex. The NF-Y complex stimulates the transcription of various genes by recognizing and binding to a CCAAT motif in promoters. This chain is Nuclear transcription factor Y subunit B-8 (NFYB8), found in Arabidopsis thaliana (Mouse-ear cress).